The sequence spans 603 residues: Bifunctional 3-dehydroquinate dehydratase/shikimate dehydrogenase, chloroplastic (603 aa).

The segment covering 1-10 has biased composition (polar residues); that stretch reads MAASSTNARL. The segment at 1–22 is disordered; it reads MAASSTNARLTNPPRLLSKPRL. Residues 1–66 constitute a chloroplast transit peptide; the sequence is MAASSTNARL…VVFSDQRRRR (66 aa). Low complexity predominate over residues 13 to 22; the sequence is PPRLLSKPRL. Residues 96-313 form a 3-dehydroquinate dehydratase region; that stretch reads ICAPVMADSI…QPTIKDLLDL (218 aa). The 3-dehydroshikimate site is built by Glu124, Arg126, and Arg155. The active-site Proton acceptor; for 3-dehydroquinate dehydratase activity is the His214. 3-dehydroshikimate-binding residues include Lys241, Arg279, Ser300, and Gln304. Lys241 (schiff-base intermediate with substrate; for 3-dehydroquinate dehydratase activity) is an active-site residue. The shikimate dehydrogenase stretch occupies residues 328 to 558; sequence IIGKPVSHSK…VYTPRITRLL (231 aa). 6 residues coordinate shikimate: Ser336, Ser338, Thr381, Lys385, Asn406, and Asp423. The For shikimate dehydrogenase activity role is filled by Lys385. Catalysis depends on Asp423, which acts as the For shikimate dehydrogenase activity. The NADP(+) site is built by Ala461, Gly463, Ala464, Asn483, Thr485, Arg488, Met525, and Ala548. Shikimate is bound at residue Tyr550. Gly571 provides a ligand contact to NADP(+). The shikimate site is built by Gln578 and Gln582.

The protein in the N-terminal section; belongs to the type-I 3-dehydroquinase family. It in the C-terminal section; belongs to the shikimate dehydrogenase family. In terms of assembly, monomer.

Its subcellular location is the plastid. The protein localises to the chloroplast. It carries out the reaction 3-dehydroquinate = 3-dehydroshikimate + H2O. It catalyses the reaction shikimate + NADP(+) = 3-dehydroshikimate + NADPH + H(+). It participates in metabolic intermediate biosynthesis; chorismate biosynthesis; chorismate from D-erythrose 4-phosphate and phosphoenolpyruvate: step 3/7. The protein operates within metabolic intermediate biosynthesis; chorismate biosynthesis; chorismate from D-erythrose 4-phosphate and phosphoenolpyruvate: step 4/7. Functionally, bifunctional dehydroquinate dehydratase-shikimate dehydrogenase enzyme that catalyzes two steps in the chorismate biosynthesis pathway. The protein is Bifunctional 3-dehydroquinate dehydratase/shikimate dehydrogenase, chloroplastic of Arabidopsis thaliana (Mouse-ear cress).